The sequence spans 347 residues: MCSLITQLCDAGQLADYVGLGWLNAVSSQPYLVQALGLQPPPRRVDVDAAFRDAEGLHGHQPWVATPLPGRTVRALFIGINYYGTSAALSGCCNDVKQMLATLQKKGLPINEAVILVDEDNFPGRTDQPTRDNIVRYMAWLVKDAKPGDVLFFHYSGHGTQCKSRGDSDEKYDQCIAPVDFQKSGCIVDDDIHKLLFSRLPEKVRLTAVFDCCHSGSIMDLPFTYVCSGGEQASGTPHMKRIREGNDVLGDVMMISGCADEQTSADVKNTATFGTGSTGAGGAATQCITCMLMNNQSLSYGKLLIETRDMLKRKGFKQVPQLSASKAIDLDQTFSLTEMFSVDRSVQ.

Residues 1-70 (MCSLITQLCD…QPWVATPLPG (70 aa)) are regulates substrate access to the active site. Histidine 158 is an active-site residue. Ca(2+)-binding residues include aspartate 173, aspartate 189, and aspartate 190. Cysteine 213 is a catalytic residue. A Ca(2+)-binding site is contributed by aspartate 220.

The protein belongs to the peptidase C14B family. As to quaternary structure, monomer. In terms of processing, auto-proteolytic cleavage of the propeptide after Lys-55 and between the large and small subunits after Lys-268 is required for catalytic activity towards large protein substrates but is dispensable towards small oligopeptide substrates. After processing, the propeptide and the large and small subunits remain associated by non-covalent bonds. In vivo, the unprocessed enzyme appears to be the predominant form.

It localises to the recycling endosome. With respect to regulation, activated by Ca(2+). In response to calcium binding, the 280-loop, the 280-loop, a disordered loop consisting of residues 269-275, undergoes a conformational change which stabilizes substrates in the active site. The binding to the substrate triggers the release of the N-terminal region resulting in the activation of the enzyme. Proteolytic cleavage is required for catalytic activity towards large protein substrates. Its function is as follows. Cysteine protease that cleaves specifically after arginine or lysine residues. The protein is Metacaspase-2 of Trypanosoma brucei brucei.